Here is a 69-residue protein sequence, read N- to C-terminus: Cell division protein ZapB (69 aa).

The stretch at 6–68 (LEQLEARVQS…LGKMDQMNSE (63 aa)) forms a coiled coil.

Belongs to the ZapB family. Homodimer. The ends of the coiled-coil dimer bind to each other, forming polymers. Interacts with FtsZ.

The protein localises to the cytoplasm. Non-essential, abundant cell division factor that is required for proper Z-ring formation. It is recruited early to the divisome by direct interaction with FtsZ, stimulating Z-ring assembly and thereby promoting cell division earlier in the cell cycle. Its recruitment to the Z-ring requires functional FtsA or ZipA. In Tolumonas auensis (strain DSM 9187 / NBRC 110442 / TA 4), this protein is Cell division protein ZapB.